Here is a 269-residue protein sequence, read N- to C-terminus: Pertussis toxin subunit 1 homolog (269 aa).

Positions 1 to 34 (MRCTRAIRQTARTGWLTWLAILAVTAPMTSPAWA) are cleaved as a signal peptide.

This sequence belongs to the bacterial exotoxin subunit A family.

In Bordetella parapertussis (strain 12822 / ATCC BAA-587 / NCTC 13253), this protein is Pertussis toxin subunit 1 homolog (ptxA).